A 344-amino-acid polypeptide reads, in one-letter code: Phosphate acyltransferase (344 aa).

This sequence belongs to the PlsX family. In terms of assembly, homodimer. Probably interacts with PlsY.

The protein localises to the cytoplasm. It catalyses the reaction a fatty acyl-[ACP] + phosphate = an acyl phosphate + holo-[ACP]. It participates in lipid metabolism; phospholipid metabolism. Catalyzes the reversible formation of acyl-phosphate (acyl-PO(4)) from acyl-[acyl-carrier-protein] (acyl-ACP). This enzyme utilizes acyl-ACP as fatty acyl donor, but not acyl-CoA. This is Phosphate acyltransferase from Cronobacter sakazakii (strain ATCC BAA-894) (Enterobacter sakazakii).